A 447-amino-acid polypeptide reads, in one-letter code: Tryptophan 5-hydroxylase 1 (447 aa).

The 76-residue stretch at 22–97 folds into the ACT domain; sequence TLIFSLENEV…TVLSVDSPDQ (76 aa). Serine 61 is modified (phosphoserine; by PKA). The L-tryptophan site is built by tyrosine 238, arginine 260, and threonine 268. 3 residues coordinate Fe cation: histidine 275, histidine 280, and glutamate 320. L-tryptophan-binding residues include serine 339 and isoleucine 369.

It belongs to the biopterin-dependent aromatic amino acid hydroxylase family. In terms of assembly, homotetramer. Interacts with DNAJC12. Fe(2+) serves as cofactor. Post-translationally, ubiquitinated, leading to its degradation by the proteasome. Ubiquitinated is triggered by phosphorylation. Phosphorylated; triggering degradation by the proteasome.

The enzyme catalyses (6R)-L-erythro-5,6,7,8-tetrahydrobiopterin + L-tryptophan + O2 = 5-hydroxy-L-tryptophan + (4aS,6R)-4a-hydroxy-L-erythro-5,6,7,8-tetrahydrobiopterin. It participates in aromatic compound metabolism; serotonin biosynthesis; serotonin from L-tryptophan: step 1/2. Oxidizes L-tryptophan to 5-hydroxy-l-tryptophan in the rate-determining step of serotonin biosynthesis. The protein is Tryptophan 5-hydroxylase 1 of Mus musculus (Mouse).